The primary structure comprises 184 residues: Mediator of RNA polymerase II transcription subunit 30 (184 aa).

A coiled-coil region spans residues 136-179 (SQLRFASEEKREILEVNKKLKQKNQQLKQIMDQLRNLIWDINSM).

It belongs to the Mediator complex subunit 30 family. Component of the Mediator complex.

It localises to the nucleus. Functionally, component of the Mediator complex, a coactivator involved in the regulated transcription of nearly all RNA polymerase II-dependent genes. Mediator functions as a bridge to convey information from gene-specific regulatory proteins to the basal RNA polymerase II transcription machinery. Mediator is recruited to promoters by direct interactions with regulatory proteins and serves as a scaffold for the assembly of a functional preinitiation complex with RNA polymerase II and the general transcription factors. This Xenopus laevis (African clawed frog) protein is Mediator of RNA polymerase II transcription subunit 30 (med30).